The chain runs to 222 residues: Putative thymidylate synthase (222 aa).

The active site involves Cys-139.

It belongs to the thymidylate synthase family. Archaeal-type ThyA subfamily. Monomer.

The protein localises to the cytoplasm. Its pathway is pyrimidine metabolism; dTTP biosynthesis. May catalyze the biosynthesis of dTMP using an unknown cosubstrate. The polypeptide is Putative thymidylate synthase (Methanocaldococcus jannaschii (strain ATCC 43067 / DSM 2661 / JAL-1 / JCM 10045 / NBRC 100440) (Methanococcus jannaschii)).